The chain runs to 354 residues: Neutral protease 2 homolog AN7962 (354 aa).

The N-terminal stretch at 1 to 19 (MKFIAPIALLGMFQAASAS) is a signal peptide. A propeptide spanning residues 20-178 (PVDIKTSNAG…GAQLSKLSKR (159 aa)) is cleaved from the precursor. 2 cysteine pairs are disulfide-bonded: cysteine 184-cysteine 255 and cysteine 262-cysteine 280. Histidine 305 contributes to the Zn(2+) binding site. Glutamate 306 is an active-site residue. The Zn(2+) site is built by histidine 309 and aspartate 320.

The protein belongs to the peptidase M35 family. Zn(2+) serves as cofactor.

Its subcellular location is the secreted. It catalyses the reaction Preferential cleavage of bonds with hydrophobic residues in P1'. Also 3-Asn-|-Gln-4 and 8-Gly-|-Ser-9 bonds in insulin B chain.. Its function is as follows. Secreted metalloproteinase that allows assimilation of proteinaceous substrates. Shows high activities on basic nuclear substrates such as histone and protamine. The protein is Neutral protease 2 homolog AN7962 of Emericella nidulans (strain FGSC A4 / ATCC 38163 / CBS 112.46 / NRRL 194 / M139) (Aspergillus nidulans).